The chain runs to 86 residues: Large ribosomal subunit protein bL31B (86 aa).

This sequence belongs to the bacterial ribosomal protein bL31 family. Type B subfamily. Part of the 50S ribosomal subunit.

In Cupriavidus pinatubonensis (strain JMP 134 / LMG 1197) (Cupriavidus necator (strain JMP 134)), this protein is Large ribosomal subunit protein bL31B.